The following is a 61-amino-acid chain: Small ribosomal subunit protein uS14 (61 aa).

The Zn(2+) site is built by cysteine 24, cysteine 27, cysteine 40, and cysteine 43.

Belongs to the universal ribosomal protein uS14 family. Zinc-binding uS14 subfamily. As to quaternary structure, part of the 30S ribosomal subunit. Contacts proteins S3 and S10. Zn(2+) is required as a cofactor.

Functionally, binds 16S rRNA, required for the assembly of 30S particles and may also be responsible for determining the conformation of the 16S rRNA at the A site. The polypeptide is Small ribosomal subunit protein uS14 (Rhodococcus erythropolis (strain PR4 / NBRC 100887)).